The following is a 388-amino-acid chain: LL-diaminopimelate aminotransferase (388 aa).

The substrate site is built by Y16 and G41. Pyridoxal 5'-phosphate contacts are provided by residues Y70, 104-105 (SK), Y129, N179, Y210, and 239-241 (SLS). Positions 105, 129, and 179 each coordinate substrate. Residue K242 is modified to N6-(pyridoxal phosphate)lysine. Residue R250 participates in pyridoxal 5'-phosphate binding. Substrate is bound at residue R368.

This sequence belongs to the class-I pyridoxal-phosphate-dependent aminotransferase family. LL-diaminopimelate aminotransferase subfamily. As to quaternary structure, homodimer. It depends on pyridoxal 5'-phosphate as a cofactor.

The catalysed reaction is (2S,6S)-2,6-diaminopimelate + 2-oxoglutarate = (S)-2,3,4,5-tetrahydrodipicolinate + L-glutamate + H2O + H(+). It functions in the pathway amino-acid biosynthesis; L-lysine biosynthesis via DAP pathway; LL-2,6-diaminopimelate from (S)-tetrahydrodipicolinate (aminotransferase route): step 1/1. In terms of biological role, involved in the synthesis of meso-diaminopimelate (m-DAP or DL-DAP), required for both lysine and peptidoglycan biosynthesis. Catalyzes the direct conversion of tetrahydrodipicolinate to LL-diaminopimelate. This is LL-diaminopimelate aminotransferase from Nitratidesulfovibrio vulgaris (strain DP4) (Desulfovibrio vulgaris).